Here is a 451-residue protein sequence, read N- to C-terminus: Phosphoglucosamine mutase (451 aa).

Serine 102 acts as the Phosphoserine intermediate in catalysis. Mg(2+) contacts are provided by serine 102, aspartate 243, aspartate 245, and aspartate 247. Position 102 is a phosphoserine (serine 102).

The protein belongs to the phosphohexose mutase family. Mg(2+) serves as cofactor. Activated by phosphorylation.

The catalysed reaction is alpha-D-glucosamine 1-phosphate = D-glucosamine 6-phosphate. Its function is as follows. Catalyzes the conversion of glucosamine-6-phosphate to glucosamine-1-phosphate. The protein is Phosphoglucosamine mutase of Sinorhizobium medicae (strain WSM419) (Ensifer medicae).